We begin with the raw amino-acid sequence, 804 residues long: Leucine--tRNA ligase (804 aa).

Positions 40–51 (PYPSGAGLHVGH) match the 'HIGH' region motif. The 'KMSKS' region motif lies at 576–580 (KMSKS). Lys579 lines the ATP pocket.

This sequence belongs to the class-I aminoacyl-tRNA synthetase family.

The protein localises to the cytoplasm. The enzyme catalyses tRNA(Leu) + L-leucine + ATP = L-leucyl-tRNA(Leu) + AMP + diphosphate. This Bacillus licheniformis (strain ATCC 14580 / DSM 13 / JCM 2505 / CCUG 7422 / NBRC 12200 / NCIMB 9375 / NCTC 10341 / NRRL NRS-1264 / Gibson 46) protein is Leucine--tRNA ligase.